A 78-amino-acid chain; its full sequence is Acyl carrier protein (78 aa).

The Carrier domain maps to 4–78 (AEIKDKVYDI…QQAIDYIVKK (75 aa)). Ser39 carries the O-(pantetheine 4'-phosphoryl)serine modification.

This sequence belongs to the acyl carrier protein (ACP) family. Post-translationally, 4'-phosphopantetheine is transferred from CoA to a specific serine of apo-ACP by AcpS. This modification is essential for activity because fatty acids are bound in thioester linkage to the sulfhydryl of the prosthetic group.

Its subcellular location is the cytoplasm. Its pathway is lipid metabolism; fatty acid biosynthesis. Its function is as follows. Carrier of the growing fatty acid chain in fatty acid biosynthesis. This Chlorobium phaeovibrioides (strain DSM 265 / 1930) (Prosthecochloris vibrioformis (strain DSM 265)) protein is Acyl carrier protein.